Consider the following 181-residue polypeptide: Adenine phosphoribosyltransferase (181 aa).

This sequence belongs to the purine/pyrimidine phosphoribosyltransferase family. Homodimer.

The protein localises to the cytoplasm. It catalyses the reaction AMP + diphosphate = 5-phospho-alpha-D-ribose 1-diphosphate + adenine. It participates in purine metabolism; AMP biosynthesis via salvage pathway; AMP from adenine: step 1/1. Its function is as follows. Catalyzes a salvage reaction resulting in the formation of AMP, that is energically less costly than de novo synthesis. The chain is Adenine phosphoribosyltransferase from Colwellia psychrerythraea (strain 34H / ATCC BAA-681) (Vibrio psychroerythus).